Reading from the N-terminus, the 163-residue chain is Epithelial membrane protein 3 (163 aa).

Residues 4–24 (LLLVVSALHILILILLFVATL) traverse the membrane as a helical segment. 2 N-linked (GlcNAc...) asparagine glycosylation sites follow: Asn-49 and Asn-56. The next 3 membrane-spanning stretches (helical) occupy residues 66–86 (VQVL…LFMF), 100–120 (TGFC…IYAI), and 139–159 (FALA…YIHL).

It belongs to the PMP-22/EMP/MP20 family.

It is found in the membrane. Its function is as follows. Probably involved in cell proliferation and cell-cell interactions. The chain is Epithelial membrane protein 3 (EMP3) from Bos taurus (Bovine).